Here is a 323-residue protein sequence, read N- to C-terminus: Olfactory receptor 2AE1 (323 aa).

Residues 1-25 (MWQKNQTSLADFILEGLFDDSLTHL) are Extracellular-facing. N5 carries N-linked (GlcNAc...) asparagine glycosylation. A helical transmembrane segment spans residues 26 to 49 (FLFSLTMVVFLIAVSGNTLTILLI). Topologically, residues 50–57 (CIDPQLHT) are cytoplasmic. Residues 58–79 (PMYFLLSQLSLMDLMHVSTIIL) traverse the membrane as a helical segment. Topologically, residues 80–100 (KMATNYLSGKKSISFVGCATQ) are extracellular. A disulfide bridge connects residues C97 and C189. Residues 101–120 (HFLYLCLGGAECFLLAVMSY) traverse the membrane as a helical segment. Residues 121-139 (DRYVAICHPLRYAVLMNKK) are Cytoplasmic-facing. Residues 140–158 (VGLMMAVMSWLGASVNSLI) form a helical membrane-spanning segment. The Extracellular portion of the chain corresponds to 159–195 (HMAILMHFPFCGPRKVYHFYCEFPAVVKLVCGDITVY). Residues 196 to 218 (ETTVYISSILLLLPIFLISTSYV) traverse the membrane as a helical segment. At 219–235 (FILQSVIQMRSSGSKRN) the chain is on the cytoplasmic side. Residues 236 to 258 (AFATCGSHLTVVSLWFGACIFSY) traverse the membrane as a helical segment. At 259–271 (MRPRSQCTLLQNK) the chain is on the extracellular side. The chain crosses the membrane as a helical span at residues 272–291 (VGSVFYSIITPTLNSLIYTL). Over 292 to 323 (RNKDVAKALRRVLRRDVITQCIQRLQLWLPRV) the chain is Cytoplasmic.

The protein belongs to the G-protein coupled receptor 1 family.

Its subcellular location is the cell membrane. Functionally, odorant receptor. This chain is Olfactory receptor 2AE1 (OR2AE1), found in Homo sapiens (Human).